The chain runs to 349 residues: Nuclear distribution protein nudE homolog 1-B (349 aa).

A coiled-coil region spans residues 22 to 189 (VAMKYKQCSE…ELAVQQKQEK (168 aa)).

This sequence belongs to the nudE family. As to quaternary structure, self-associates. Interacts with pafah1b1. In terms of processing, phosphorylated in mitosis.

It is found in the cytoplasm. Its subcellular location is the cytoskeleton. The protein localises to the microtubule organizing center. It localises to the centrosome. The protein resides in the spindle. It is found in the chromosome. Its subcellular location is the centromere. The protein localises to the kinetochore. It localises to the cleavage furrow. The protein resides in the cytoplasmic vesicle membrane. Required for centrosome duplication and formation and function of the mitotic spindle. This Xenopus laevis (African clawed frog) protein is Nuclear distribution protein nudE homolog 1-B (nde1-b).